Reading from the N-terminus, the 263-residue chain is N-acetylgalactosamine permease IID component (263 aa).

Residues 3–263 (SEISKKDITR…SIVCSAFGIL (261 aa)) form the PTS EIID domain. Helical transmembrane passes span 61–81 (LEFI…LISM), 98–118 (LFGP…LPIM), 131–151 (LLGP…RVGW), 178–198 (TILG…INVV), 215–235 (FFDK…MYYF), and 243–263 (PVLL…FGIL).

It localises to the cell inner membrane. Functionally, the phosphoenolpyruvate-dependent sugar phosphotransferase system (PTS), a major carbohydrate active -transport system, catalyzes the phosphorylation of incoming sugar substrates concomitant with their translocation across the cell membrane. This system is involved in N-acetylgalactosamine transport. This chain is N-acetylgalactosamine permease IID component (agaD), found in Escherichia coli (strain K12).